Reading from the N-terminus, the 3425-residue chain is Genome polyprotein (3425 aa).

Positions 3 to 16 (NKKPGRPGSGRVVN) are interaction with host EXOC1. The hydrophobic; homodimerization of capsid protein C stretch occupies residues 38–73 (VLRGAGPIRFVLALLTFFKFTALRPTIGMLKRWKLV). Residues 105-120 (GGSCSWIIMLLPIVAG) constitute a propeptide, ER anchor for the capsid protein C, removed in mature form by serine protease NS3. A helical membrane pass occupies residues 105–125 (GGSCSWIIMLLPIVAGLKLGN). Residue asparagine 135 is glycosylated (N-linked (GlcNAc...) asparagine; by host). The next 2 membrane-spanning stretches (helical) occupy residues 247-267 (WALR…NLGT) and 273-293 (IIFT…CLGM). Cystine bridges form between cysteine 290–cysteine 317, cysteine 347–cysteine 403, cysteine 361–cysteine 392, cysteine 379–cysteine 408, cysteine 477–cysteine 575, and cysteine 592–cysteine 623. The fusion peptide stretch occupies residues 385 to 398 (DRGWGNGCGLFGKG). The next 2 membrane-spanning stretches (helical) occupy residues 740 to 760 (LFGG…LWMG) and 768 to 788 (ISMT…NVNA). Cysteine 792 and cysteine 803 are joined by a disulfide. N-linked (GlcNAc...) asparagine; by host glycans are attached at residues asparagine 918, asparagine 963, and asparagine 995. 4 cysteine pairs are disulfide-bonded: cysteine 967-cysteine 1011, cysteine 1068-cysteine 1117, cysteine 1079-cysteine 1100, and cysteine 1101-cysteine 1104. Transmembrane regions (helical) follow at residues 1138-1158 (VMAF…VMIV), 1169-1189 (TAPI…FGGI), 1214-1234 (IVHL…IGFL), 1290-1310 (FALP…IDVV), 1337-1357 (MLLG…FAGL), 1369-1389 (WPVS…GGIA), and 1395-1415 (SMAI…VTGF). Positions 1421–1460 (LEKASDISWSEEARVTGASQRFDVEIDQDGNMRLLNDPGV) are interacts with and activates NS3 protease. Positions 1499–1676 (GGVIWDVPAP…EKKEEEVPQV (178 aa)) constitute a Peptidase S7 domain. Residues histidine 1549, aspartate 1573, and serine 1633 each act as charge relay system; for serine protease NS3 activity in the active site. Residues 1679 to 1835 (ENMLRKRQLT…DSNSPITDIE (157 aa)) enclose the Helicase ATP-binding domain. The segment at 1683-1686 (RKRQ) is important for RNA-binding. 1692 to 1699 (LHPGSGKT) contributes to the ATP binding site. The DEAH box signature appears at 1783 to 1786 (DEAH). In terms of domain architecture, Helicase C-terminal spans 1845–2011 (SGYEWITDFQ…GLVAQLYGPE (167 aa)). The interval 2162-2166 (EELPE) is regulates the ATPase activity of NS3 helicase. 8 consecutive transmembrane segments (helical) span residues 2169–2189 (ETFL…LFFV), 2194–2214 (LGKT…LWIA), 2216–2236 (VPAQ…IVLI), 2252–2272 (VFMI…MGWL), 2306–2326 (AWAA…HLII), 2334–2354 (LMAM…MPFV), 2371–2391 (FTMT…AFLV), and 2441–2461 (CVLV…LTLT). Positions 2521-2786 (GGGTGRTLGE…DVDLGSGTRA (266 aa)) constitute an mRNA cap 0-1 NS5-type MT domain. Serine 2576 serves as a coordination point for S-adenosyl-L-methionine. Serine 2576 is modified (phosphoserine). The For 2'-O-MTase activity role is filled by lysine 2581. Residues glycine 2606, tryptophan 2607, threonine 2624, lysine 2625, and valine 2652 each coordinate S-adenosyl-L-methionine. Catalysis depends on aspartate 2666, which acts as the For 2'-O-MTase activity. Residue isoleucine 2667 participates in S-adenosyl-L-methionine binding. Active-site for 2'-O-MTase activity residues include lysine 2702 and glutamate 2738. Tyrosine 2740 contributes to the S-adenosyl-L-methionine binding site. Zn(2+)-binding residues include glutamate 2960, histidine 2964, cysteine 2969, and cysteine 2972. The RdRp catalytic domain occupies 3050–3202 (GLMYADDTAG…KPADDRFATA (153 aa)). Zn(2+) is bound by residues histidine 3237, cysteine 3253, and cysteine 3372. Residues 3423-3425 (GVL) carry the PDZ-binding motif.

In the N-terminal section; belongs to the class I-like SAM-binding methyltransferase superfamily. mRNA cap 0-1 NS5-type methyltransferase family. Homodimer. In terms of assembly, forms heterodimers with envelope protein E in the endoplasmic reticulum and Golgi. As to quaternary structure, homodimer; in the endoplasmic reticulum and Golgi. Interacts with protein prM. Interacts with non-structural protein 1. Homodimer; Homohexamer when secreted. Interacts with envelope protein E. NS1 interacts with NS4B. Interacts with host MAVS (via C-terminus); this interaction blocks the interaction of MAVS with RIGI or IFIH1/MDA5. In terms of assembly, interacts (via N-terminus) with serine protease NS3. As to quaternary structure, forms a heterodimer with serine protease NS3. May form homooligomers. Forms a heterodimer with NS2B. Interacts with non-structural protein 2A (via N-terminus). Interacts with NS4B. Interacts with unphosphorylated RNA-directed RNA polymerase NS5; this interaction stimulates RNA-directed RNA polymerase NS5 guanylyltransferase activity. In terms of assembly, interacts with serine protease NS3. As to quaternary structure, homodimer. Post-translationally, specific enzymatic cleavages in vivo yield mature proteins. Cleavages in the lumen of endoplasmic reticulum are performed by host signal peptidase, whereas cleavages in the cytoplasmic side are performed by serine protease NS3. Signal cleavage at the 2K-4B site requires a prior NS3 protease-mediated cleavage at the 4A-2K site. Both NS2A and NS2B proteins are required in cis for NS2A/2B proteolytic processing. Cleaved in post-Golgi vesicles by a host furin, releasing the mature small envelope protein M, and peptide pr. This cleavage is incomplete as up to 30% of viral particles still carry uncleaved prM. In terms of processing, N-glycosylated. Post-translationally, N-glycosylated. The excreted form is glycosylated and this is required for efficient secretion of the protein from infected cells. Phosphorylated on serines residues. This phosphorylation may trigger NS5 nuclear localization.

The protein resides in the virion. It localises to the host nucleus. Its subcellular location is the host cytoplasm. It is found in the host perinuclear region. The protein localises to the secreted. The protein resides in the virion membrane. It localises to the host endoplasmic reticulum membrane. The enzyme catalyses Selective hydrolysis of -Xaa-Xaa-|-Yaa- bonds in which each of the Xaa can be either Arg or Lys and Yaa can be either Ser or Ala.. It catalyses the reaction RNA(n) + a ribonucleoside 5'-triphosphate = RNA(n+1) + diphosphate. It carries out the reaction a ribonucleoside 5'-triphosphate + H2O = a ribonucleoside 5'-diphosphate + phosphate + H(+). The catalysed reaction is ATP + H2O = ADP + phosphate + H(+). The enzyme catalyses a 5'-end (5'-triphosphoguanosine)-ribonucleoside in mRNA + S-adenosyl-L-methionine = a 5'-end (N(7)-methyl 5'-triphosphoguanosine)-ribonucleoside in mRNA + S-adenosyl-L-homocysteine. It catalyses the reaction a 5'-end (N(7)-methyl 5'-triphosphoguanosine)-ribonucleoside in mRNA + S-adenosyl-L-methionine = a 5'-end (N(7)-methyl 5'-triphosphoguanosine)-(2'-O-methyl-ribonucleoside) in mRNA + S-adenosyl-L-homocysteine + H(+). In terms of biological role, capsid protein self-assembles to form an icosahedral capsid about 40 nm in diameter. Plays a role in virus budding by binding to the cell membrane and gathering the viral RNA into a nucleocapsid that forms the core of a mature virus particle. Prevents premature fusion activity of envelope proteins in trans-Golgi by binding to envelope protein E at pH6.0. After virion release in extracellular space, gets dissociated from E dimers. Its function is as follows. Acts as a chaperone for envelope protein E during intracellular virion assembly by masking and inactivating envelope protein E fusion peptide. prM is the only viral peptide matured by host furin in the trans-Golgi network probably to avoid catastrophic activation of the viral fusion activity in acidic Golgi compartment prior to virion release. prM-E cleavage is inefficient, and many virions are only partially matured. These uncleaved prM would play a role in immune evasion. Functionally, may play a role in virus budding. Exerts cytotoxic effects by activating a mitochondrial apoptotic pathway through M ectodomain. May display a viroporin activity. In terms of biological role, binds to host cell surface receptor and mediates fusion between viral and cellular membranes. Envelope protein is synthesized in the endoplasmic reticulum in the form of heterodimer with protein prM. They play a role in virion budding in the ER, and the newly formed immature particle is covered with 60 spikes composed of heterodimer between precursor prM and envelope protein E. The virion is transported to the Golgi apparatus where the low pH causes dissociation of PrM-E heterodimers and formation of E homodimers. Involved in immune evasion, pathogenesis and viral replication. Interacts with host MAVS and blocks MAVS binding to RIGI or IFIH1/MDA5, thereby leading to evasion of the innate immune response. Once cleaved off the polyprotein, is targeted to three destinations: the viral replication cycle, the plasma membrane and the extracellular compartment. Essential for viral replication. Required for formation of the replication complex and recruitment of other non-structural proteins to the ER-derived membrane structures. Excreted as a hexameric lipoparticle that plays a role against host immune response. Its function is as follows. Component of the viral RNA replication complex that functions in virion assembly. Functionally, required cofactor for the serine protease function of NS3. May have membrane-destabilizing activity and form viroporins. In terms of biological role, displays three enzymatic activities: serine protease, NTPase and RNA helicase. NS3 serine protease, in association with NS2B, performs its autocleavage and cleaves the polyprotein at dibasic sites in the cytoplasm: C-prM, NS2A-NS2B, NS2B-NS3, NS3-NS4A, NS4A-2K and NS4B-NS5. NS3 RNA helicase binds RNA and unwinds dsRNA in the 3' to 5' direction. Regulates the ATPase activity of the NS3 helicase activity. NS4A allows NS3 helicase to conserve energy during unwinding. Its function is as follows. Functions as a signal peptide for NS4B. Functionally, induces the formation of ER-derived membrane vesicles where the viral replication takes place. In terms of biological role, replicates the viral (+) and (-) RNA genome, and performs the capping of genomes in the cytoplasm. NS5 methylates viral RNA cap at guanine N-7 and ribose 2'-O positions. This is Genome polyprotein from Anas (ducks).